A 598-amino-acid chain; its full sequence is Elongation factor 4 (598 aa).

A tr-type G domain is found at 2 to 184; it reads KQIRNFSIIA…RLVKEIPAPE (183 aa). GTP contacts are provided by residues 14-19 and 131-134; these read DHGKST and NKID.

This sequence belongs to the TRAFAC class translation factor GTPase superfamily. Classic translation factor GTPase family. LepA subfamily.

The protein resides in the cell inner membrane. It catalyses the reaction GTP + H2O = GDP + phosphate + H(+). Functionally, required for accurate and efficient protein synthesis under certain stress conditions. May act as a fidelity factor of the translation reaction, by catalyzing a one-codon backward translocation of tRNAs on improperly translocated ribosomes. Back-translocation proceeds from a post-translocation (POST) complex to a pre-translocation (PRE) complex, thus giving elongation factor G a second chance to translocate the tRNAs correctly. Binds to ribosomes in a GTP-dependent manner. In Photorhabdus laumondii subsp. laumondii (strain DSM 15139 / CIP 105565 / TT01) (Photorhabdus luminescens subsp. laumondii), this protein is Elongation factor 4.